Consider the following 525-residue polypeptide: GMP synthase [glutamine-hydrolyzing] (525 aa).

Positions Arg9–Leu207 constitute a Glutamine amidotransferase type-1 domain. Cys86 functions as the Nucleophile in the catalytic mechanism. Active-site residues include His181 and Glu183. In terms of domain architecture, GMPS ATP-PPase spans Trp208 to Arg400. ATP is bound at residue Ser235–Ser241.

In terms of assembly, homodimer.

It carries out the reaction XMP + L-glutamine + ATP + H2O = GMP + L-glutamate + AMP + diphosphate + 2 H(+). Its pathway is purine metabolism; GMP biosynthesis; GMP from XMP (L-Gln route): step 1/1. Catalyzes the synthesis of GMP from XMP. This is GMP synthase [glutamine-hydrolyzing] from Yersinia pestis bv. Antiqua (strain Antiqua).